The primary structure comprises 217 residues: uncharacterized protein (217 aa).

A compositionally biased stretch (polar residues) spans 59 to 76; sequence AQSTIQRTSSLPVPSSSN. 2 disordered regions span residues 59–105 and 124–217; these read AQST…ETAN and KKSL…HISK. Phosphoserine is present on serine 68. Threonine 92 is modified (phosphothreonine). The segment covering 124-135 has biased composition (basic and acidic residues); that stretch reads KKSLERRVREEQ. Acidic residues predominate over residues 136-147; it reads EEKTDNEDDNDV. A compositionally biased stretch (polar residues) spans 148 to 157; it reads EISTQESLEN. Acidic residues predominate over residues 173-188; it reads LEDDIEGQEFSFDDQD. The segment covering 199–217 has biased composition (polar residues); that stretch reads WLSSQKQQGSPLTSDHISK.

This is an uncharacterized protein from Schizosaccharomyces pombe (strain 972 / ATCC 24843) (Fission yeast).